The following is a 218-amino-acid chain: Ribose-5-phosphate isomerase A (218 aa).

Residues 28–31 (TGST), 81–84 (DGAD), and 94–97 (KGGG) each bind substrate. The active-site Proton acceptor is Glu-103. Residue Lys-121 coordinates substrate.

The protein belongs to the ribose 5-phosphate isomerase family. Homodimer.

It catalyses the reaction aldehydo-D-ribose 5-phosphate = D-ribulose 5-phosphate. Its pathway is carbohydrate degradation; pentose phosphate pathway; D-ribose 5-phosphate from D-ribulose 5-phosphate (non-oxidative stage): step 1/1. Its function is as follows. Catalyzes the reversible conversion of ribose-5-phosphate to ribulose 5-phosphate. The chain is Ribose-5-phosphate isomerase A from Psychromonas ingrahamii (strain DSM 17664 / CCUG 51855 / 37).